The chain runs to 273 residues: Homeobox protein Nkx-2.2 (273 aa).

Disordered regions lie at residues 1-56 and 90-131; these read MSLT…LDAV and LAAG…KRKR. The span at 20–38 shows a compositional bias: acidic residues; that stretch reads DTNDEEGSVAEGPEEENEG. The homeobox DNA-binding region spans 128–187; it reads KRKRRVLFSKAQTYELERRFRQQRYLSAPEREHLASLIRLTPTQVKIWFQNHRYKMKRAR.

This sequence belongs to the NK-2 homeobox family. In terms of assembly, interacts with OLIG2.

It localises to the nucleus. In terms of biological role, transcriptional activator involved in the development of insulin-producting beta cells in the endocrine pancreas. May also be involved in specifying diencephalic neuromeric boundaries, and in controlling the expression of genes that play a role in axonal guidance. Binds to elements within the NEUROD1 promoter. This is Homeobox protein Nkx-2.2 (NKX2-2) from Homo sapiens (Human).